The following is a 198-amino-acid chain: ATP-dependent Clp protease proteolytic subunit 1 (198 aa).

Catalysis depends on S98, which acts as the Nucleophile. Residue H123 is part of the active site.

It belongs to the peptidase S14 family. As to quaternary structure, fourteen ClpP subunits assemble into 2 heptameric rings which stack back to back to give a disk-like structure with a central cavity, resembling the structure of eukaryotic proteasomes.

It is found in the cytoplasm. It carries out the reaction Hydrolysis of proteins to small peptides in the presence of ATP and magnesium. alpha-casein is the usual test substrate. In the absence of ATP, only oligopeptides shorter than five residues are hydrolyzed (such as succinyl-Leu-Tyr-|-NHMec, and Leu-Tyr-Leu-|-Tyr-Trp, in which cleavage of the -Tyr-|-Leu- and -Tyr-|-Trp bonds also occurs).. Functionally, cleaves peptides in various proteins in a process that requires ATP hydrolysis. Has a chymotrypsin-like activity. Plays a major role in the degradation of misfolded proteins. In Leptospira interrogans serogroup Icterohaemorrhagiae serovar copenhageni (strain Fiocruz L1-130), this protein is ATP-dependent Clp protease proteolytic subunit 1.